A 303-amino-acid chain; its full sequence is Glycine--tRNA ligase alpha subunit (303 aa).

It belongs to the class-II aminoacyl-tRNA synthetase family. As to quaternary structure, tetramer of two alpha and two beta subunits.

It localises to the cytoplasm. The enzyme catalyses tRNA(Gly) + glycine + ATP = glycyl-tRNA(Gly) + AMP + diphosphate. In Cronobacter sakazakii (strain ATCC BAA-894) (Enterobacter sakazakii), this protein is Glycine--tRNA ligase alpha subunit.